Consider the following 414-residue polypeptide: F-box protein At3g26010 (414 aa).

The F-box domain occupies 5–52; the sequence is NRTIHLTDAIWTEILARLPLRIIARFKSVSKTWKSTIESVYFRRLFVS.

The polypeptide is F-box protein At3g26010 (Arabidopsis thaliana (Mouse-ear cress)).